A 126-amino-acid polypeptide reads, in one-letter code: MNEKARLLRIRAKLKRKKPRFLRQEWWRYPKFKNDPKWRRPKGIDSKMRLKKKGKPRSPSIGWSSPKAVRGLHPSGYEEVLVHNVKELEAIDPTRQAARIAGTVGARKREMILARAKELGVKVLNP.

It belongs to the eukaryotic ribosomal protein eL32 family. Part of the 50S ribosomal subunit.

This chain is Large ribosomal subunit protein eL32 (rpl32e), found in Thermococcus kodakarensis (strain ATCC BAA-918 / JCM 12380 / KOD1) (Pyrococcus kodakaraensis (strain KOD1)).